A 151-amino-acid polypeptide reads, in one-letter code: Large ribosomal subunit protein uL15 (151 aa).

Residues M1 to L60 are disordered.

The protein belongs to the universal ribosomal protein uL15 family. In terms of assembly, part of the 50S ribosomal subunit.

Binds to the 23S rRNA. This Streptomyces griseus subsp. griseus (strain JCM 4626 / CBS 651.72 / NBRC 13350 / KCC S-0626 / ISP 5235) protein is Large ribosomal subunit protein uL15.